The following is a 743-amino-acid chain: MELEKVKINSLHCNDAVLSSLQASPSATHPQSVPSKANAVTEASIIEKTNLQHNVQEDNSYNRDCDSPVSSSSEPEKELDDLRYLHSSSLTNSVVVGKSTGSLNGAYSITSVTSKTKTLEPNSASGSACLTIAPTADHIKKRIPSSRTPTRKALRIKFYRNGDRFYPGITIPVSNERYRSFERLFEDLTRLLEENVKIPGAVRTIYNMCGKKITSLDELEDGQSYVCSCNNENFKKVEYNTGSQPLSNLTLTSSRSNSHRLDKCRPSSPLKNGLLAGSSPLPTCGGGTGNGSPHIASRSSDRVTVVHPRIVTLIRSGTKPRRIMRLLLNKRNSPSFDHVLTAITQVVRLDTGYVRKVFTLSGVSVVRLSDFFGSDDVFFAYGTERINTAEDFKLEAEEHRAINVIRKTMRTTGTTCKGPKPKMPIKSKKVYPPVVDSEAFKAATTPEDDSHAALLTSTGMEINELPSNIRNTYTLGRIIGDGNFAIVFKIKHRQTGHSYALKIIDKNKCKGKEHYIDAEVRVMKKLNHPHIISLILSVDQNTNMYLVLEYVSGGDLFDAITQVTRFSESQSRIMIRHLGAAMTYLHSMGIVHRDIKPENLLVKLDEHGHVLELKLADFGLACEVNDLLYAVCGTPTYVAPEILLEVGYGLKIDVWAAGIILYILLCGFPPFVAPDNQQEPLFDAIISGIYEFPDPYWSDIGDGVRDLIANMLQADPDVRFTSEDILDHPWTIGNQNECTTYKR.

The segment at 54–78 is disordered; that stretch reads NVQEDNSYNRDCDSPVSSSSEPEKE. Doublecortin domains follow at residues 154-240 and 309-392; these read LRIK…VEYN and RIVT…AEDF. Residues 473 to 731 enclose the Protein kinase domain; sequence YTLGRIIGDG…SEDILDHPWT (259 aa). ATP contacts are provided by residues 479–487 and Lys502; that span reads IGDGNFAIV. The active-site Proton acceptor is the Asp594.

Belongs to the protein kinase superfamily. CAMK Ser/Thr protein kinase family. CaMK subfamily.

The catalysed reaction is L-seryl-[protein] + ATP = O-phospho-L-seryl-[protein] + ADP + H(+). The enzyme catalyses L-threonyl-[protein] + ATP = O-phospho-L-threonyl-[protein] + ADP + H(+). This Drosophila simulans (Fruit fly) protein is Serine/threonine-protein kinase GD17699.